The primary structure comprises 308 residues: uncharacterized protein (308 aa).

The chain crosses the membrane as a helical span at residues 191-211 (YLCLNLPYIIVALTLVPYSLV).

It localises to the host membrane. This is an uncharacterized protein from Saccharolobus islandicus (Sulfolobus islandicus).